Here is a 409-residue protein sequence, read N- to C-terminus: Multidrug resistance protein MdtG (409 aa).

A run of 10 helical transmembrane segments spans residues 16 to 36 (LIVA…VMPF), 58 to 78 (IVFS…GGLA), 92 to 112 (LGMG…QFLI), 115 to 135 (ALLG…ATQV), 146 to 166 (TLST…GLLA), 173 to 193 (PVFF…LFCI), 224 to 244 (LFVT…ILTL), 256 to 276 (VAFI…LLSA), 291 to 311 (ILIT…YVQT), and 379 to 399 (AVFL…WNSL).

The protein belongs to the major facilitator superfamily. DHA1 family. MdtG (TC 2.A.1.2.20) subfamily.

Its subcellular location is the cell inner membrane. Confers resistance to fosfomycin and deoxycholate. The sequence is that of Multidrug resistance protein MdtG from Escherichia coli O9:H4 (strain HS).